Consider the following 376-residue polypeptide: Palmitoyl-[acyl-carrier-protein] 4-desaturase 2, chloroplastic (376 aa).

Residues 1 to 33 (MELHLALRASPLPAADPGRRPPPPRGNFATNCT) constitute a chloroplast transit peptide. Residues glutamate 114, glutamate 149, histidine 152, glutamate 202, glutamate 235, and histidine 238 each contribute to the Fe cation site.

It belongs to the fatty acid desaturase type 2 family. Homodimer. Fe(2+) is required as a cofactor. As to expression, preferentially expressed in the flower labellum.

It localises to the plastid. The protein resides in the chloroplast stroma. It catalyses the reaction hexadecanoyl-[ACP] + 2 reduced [2Fe-2S]-[ferredoxin] + O2 + 2 H(+) = (4Z)-hexadecenoyl-[ACP] + 2 oxidized [2Fe-2S]-[ferredoxin] + 2 H2O. The catalysed reaction is octadecanoyl-[ACP] + 2 reduced [2Fe-2S]-[ferredoxin] + O2 + 2 H(+) = (9Z)-octadecenoyl-[ACP] + 2 oxidized [2Fe-2S]-[ferredoxin] + 2 H2O. The protein operates within lipid metabolism; fatty acid metabolism. Converts stearoyl-ACP to oleoyl-ACP by introduction of a cis double bond between carbons 9 and 10 of the acyl chain. Converts palmitoyl-ACP to (4Z)-hexadec-4-enoyl-ACP by introduction of a cis double bond between carbons 4 and 5 of the acyl chain. Catalyzes the desaturation of saturated fatty acid 18:0 and 16:0 to generate 18:1 (delta-9) and 16:1 (delta-4) intermediates, expected to give rise to 9-alkenes and 12-alkenes, respectively. The protein is Palmitoyl-[acyl-carrier-protein] 4-desaturase 2, chloroplastic (SAD2) of Ophrys sphegodes (Early spider orchid).